A 477-amino-acid chain; its full sequence is Methylenetetrahydrofolate--tRNA-(uracil-5-)-methyltransferase TrmFO (477 aa).

14 to 19 contributes to the FAD binding site; the sequence is GGGLAG.

This sequence belongs to the MnmG family. TrmFO subfamily. The cofactor is FAD.

The protein localises to the cytoplasm. It carries out the reaction uridine(54) in tRNA + (6R)-5,10-methylene-5,6,7,8-tetrahydrofolate + NADH + H(+) = 5-methyluridine(54) in tRNA + (6S)-5,6,7,8-tetrahydrofolate + NAD(+). The enzyme catalyses uridine(54) in tRNA + (6R)-5,10-methylene-5,6,7,8-tetrahydrofolate + NADPH + H(+) = 5-methyluridine(54) in tRNA + (6S)-5,6,7,8-tetrahydrofolate + NADP(+). Catalyzes the folate-dependent formation of 5-methyl-uridine at position 54 (M-5-U54) in all tRNAs. The sequence is that of Methylenetetrahydrofolate--tRNA-(uracil-5-)-methyltransferase TrmFO from Rhizobium johnstonii (strain DSM 114642 / LMG 32736 / 3841) (Rhizobium leguminosarum bv. viciae).